We begin with the raw amino-acid sequence, 506 residues long: Galactose/methyl galactoside import ATP-binding protein MglA (506 aa).

ABC transporter domains lie at 14–249 (LEMS…VGRS) and 264–506 (VILE…SLHL). 46 to 53 (GENGAGKS) contributes to the ATP binding site.

It belongs to the ABC transporter superfamily. Galactose/methyl galactoside importer (TC 3.A.1.2.3) family. As to quaternary structure, the complex is composed of one ATP-binding protein (MglA), two transmembrane proteins (MglC) and a solute-binding protein (MglB).

It is found in the cell inner membrane. It carries out the reaction D-galactose(out) + ATP + H2O = D-galactose(in) + ADP + phosphate + H(+). It catalyses the reaction methyl beta-D-galactoside(out) + ATP + H2O = methyl beta-D-galactoside(in) + ADP + phosphate + H(+). Its function is as follows. Part of the ABC transporter complex MglABC involved in galactose/methyl galactoside import. Responsible for energy coupling to the transport system. The protein is Galactose/methyl galactoside import ATP-binding protein MglA of Escherichia coli O157:H7.